A 183-amino-acid polypeptide reads, in one-letter code: Thioredoxin-like protein CITRX, chloroplastic (183 aa).

The transit peptide at Met1–Ser81 directs the protein to the chloroplast. The region spanning Ala82–Met183 is the Thioredoxin domain. Catalysis depends on nucleophile residues Cys106 and Cys109. Cys106 and Cys109 form a disulfide bridge.

It belongs to the thioredoxin family. Plant CITRX-type subfamily. Interacts with FLN1 and FLN2. Interacts with MRL7.

It localises to the plastid. It is found in the chloroplast. In terms of biological role, thiol-disulfide oxidoreductase that plays a role in proper chloroplast development, most likely through regulating plastid-encoded polymerase (PEP) dependent chloroplast transcription. Acts as a component of the transcriptionally active plastid chromosome that is required for plastid gene expression. This is Thioredoxin-like protein CITRX, chloroplastic from Arabidopsis thaliana (Mouse-ear cress).